Here is a 490-residue protein sequence, read N- to C-terminus: Betaine aldehyde dehydrogenase (490 aa).

K(+) contacts are provided by T26, I27, and D93. 150–152 serves as a coordination point for NAD(+); sequence GAW. K162 (charge relay system) is an active-site residue. Residue 176–179 participates in NAD(+) binding; the sequence is KPSE. A K(+)-binding site is contributed by V180. 230 to 233 is an NAD(+) binding site; the sequence is GVAS. L246 serves as a coordination point for K(+). Catalysis depends on E252, which acts as the Proton acceptor. Residues G254, C286, and E387 each coordinate NAD(+). The Nucleophile role is filled by C286. C286 carries the cysteine sulfenic acid (-SOH) modification. Positions 457 and 460 each coordinate K(+). E464 functions as the Charge relay system in the catalytic mechanism.

The protein belongs to the aldehyde dehydrogenase family. Dimer of dimers. It depends on K(+) as a cofactor.

The enzyme catalyses betaine aldehyde + NAD(+) + H2O = glycine betaine + NADH + 2 H(+). The protein operates within amine and polyamine biosynthesis; betaine biosynthesis via choline pathway; betaine from betaine aldehyde: step 1/1. Involved in the biosynthesis of the osmoprotectant glycine betaine. Catalyzes the irreversible oxidation of betaine aldehyde to the corresponding acid. This is Betaine aldehyde dehydrogenase from Escherichia coli O157:H7.